A 185-amino-acid polypeptide reads, in one-letter code: Ribosome-recycling factor (185 aa).

The protein belongs to the RRF family.

It localises to the cytoplasm. Functionally, responsible for the release of ribosomes from messenger RNA at the termination of protein biosynthesis. May increase the efficiency of translation by recycling ribosomes from one round of translation to another. In Wolbachia pipientis wMel, this protein is Ribosome-recycling factor.